We begin with the raw amino-acid sequence, 288 residues long: Ras-like protein 1 (288 aa).

A GTP-binding site is contributed by 11–18 (GGGGVGKS). The Effector region motif lies at 33–41 (YDPTIEDSY). GTP-binding positions include 58 to 62 (DTAGQ) and 117 to 120 (NKCD). Residues 176 to 288 (EKQQQQQQQQ…KSKNGCCVIV (113 aa)) form a disordered region. Low complexity-rich tracts occupy residues 178 to 216 (QQQQ…NNNN) and 246 to 281 (PNQS…SKSK). A lipid anchor (S-palmitoyl cysteine) is attached at Cys284. Cys285 is modified (cysteine methyl ester). Residue Cys285 is the site of S-farnesyl cysteine attachment. A propeptide spans 286–288 (VIV) (removed in mature form).

The protein belongs to the small GTPase superfamily. Ras family.

Its subcellular location is the cell membrane. It carries out the reaction GTP + H2O = GDP + phosphate + H(+). Alternates between an inactive form bound to GDP and an active form bound to GTP. Activated by a guanine nucleotide-exchange factor (GEF) and inactivated by a GTPase-activating protein (GAP). Required for the regulation of both a MAP kinase signaling pathway and a cAMP signaling pathway. The activation of these pathways contributes to the pathogenicity of the cells through the induction of the morphological transition from the yeast to the polarized filamentous form. This Candida albicans (strain WO-1) (Yeast) protein is Ras-like protein 1 (RAS1).